Here is a 118-residue protein sequence, read N- to C-terminus: Heavy metal-associated isoprenylated plant protein 47 (118 aa).

In terms of domain architecture, HMA spans Met-1–Leu-67. Residue Cys-115 is modified to Cysteine methyl ester. A lipid anchor (S-farnesyl cysteine) is attached at Cys-115. The propeptide at Leu-116 to Met-118 is removed in mature form.

It belongs to the HIPP family.

Heavy-metal-binding protein. The polypeptide is Heavy metal-associated isoprenylated plant protein 47 (Arabidopsis thaliana (Mouse-ear cress)).